Consider the following 112-residue polypeptide: Integration host factor subunit alpha (112 aa).

Belongs to the bacterial histone-like protein family. Heterodimer of an alpha and a beta chain.

In terms of biological role, this protein is one of the two subunits of integration host factor, a specific DNA-binding protein that functions in genetic recombination as well as in transcriptional and translational control. This chain is Integration host factor subunit alpha, found in Rhizobium johnstonii (strain DSM 114642 / LMG 32736 / 3841) (Rhizobium leguminosarum bv. viciae).